The following is a 101-amino-acid chain: MIFLDSNFILLPCVLLAEVKRGFPWSSTTTVLDSCVFRLPSSPSTSSFAVLLSESSNRTSSSSSSSMLSVLFIPIILLLPPSCPLTGVTVAFFKAVGATIM.

The helical transmembrane segment at 70-90 (VLFIPIILLLPPSCPLTGVTV) threads the bilayer.

It is found in the membrane. This is an uncharacterized protein from Saccharomyces cerevisiae (strain ATCC 204508 / S288c) (Baker's yeast).